We begin with the raw amino-acid sequence, 373 residues long: 3 beta-hydroxysteroid dehydrogenase/Delta 5--&gt;4-isomerase (373 aa).

The active-site Proton acceptor is the tyrosine 155. NAD(+) is bound at residue lysine 159. The helical transmembrane segment at 288 to 308 threads the bilayer; sequence ISLEYWLAFLLEIVSFLLSPI.

The protein belongs to the 3-beta-HSD family.

It localises to the endoplasmic reticulum membrane. Its subcellular location is the mitochondrion membrane. It catalyses the reaction a 3beta-hydroxy-Delta(5)-steroid + NAD(+) = a 3-oxo-Delta(5)-steroid + NADH + H(+). The enzyme catalyses a 3-oxo-Delta(5)-steroid = a 3-oxo-Delta(4)-steroid. The protein operates within lipid metabolism; steroid biosynthesis. In terms of biological role, 3-beta-HSD is a bifunctional enzyme, that catalyzes the oxidative conversion of Delta(5)-ene-3-beta-hydroxy steroid, and the oxidative conversion of ketosteroids. The 3-beta-HSD enzymatic system plays a crucial role in the biosynthesis of all classes of hormonal steroids. The sequence is that of 3 beta-hydroxysteroid dehydrogenase/Delta 5--&gt;4-isomerase (HSD3B) from Canis lupus familiaris (Dog).